Consider the following 457-residue polypeptide: L-asparaginase-like protein GL17509 (457 aa).

Residues 1 to 20 (MRYLCRAQLLSLLLLPLLKA) form the signal peptide. 3 disulfides stabilise this stretch: cysteine 72–cysteine 78, cysteine 172–cysteine 188, and cysteine 327–cysteine 354.

This sequence belongs to the Ntn-hydrolase family.

The protein is L-asparaginase-like protein GL17509 of Drosophila persimilis (Fruit fly).